Reading from the N-terminus, the 151-residue chain is S-protein homolog 74 (151 aa).

The N-terminal stretch at 1 to 25 (MNYIKQFILAICFYLVLTCQDHVLA) is a signal peptide.

Belongs to the plant self-incompatibility (S1) protein family.

The protein resides in the secreted. In Arabidopsis thaliana (Mouse-ear cress), this protein is S-protein homolog 74.